Here is a 106-residue protein sequence, read N- to C-terminus: Nucleoid-associated protein Abu_0429 (106 aa).

The protein belongs to the YbaB/EbfC family. As to quaternary structure, homodimer.

It is found in the cytoplasm. The protein localises to the nucleoid. Binds to DNA and alters its conformation. May be involved in regulation of gene expression, nucleoid organization and DNA protection. The sequence is that of Nucleoid-associated protein Abu_0429 from Aliarcobacter butzleri (strain RM4018) (Arcobacter butzleri).